The primary structure comprises 156 residues: ATP synthase subunit b (156 aa).

Residues 3-23 (ITFTIFAQSLAFAALIWIVAT) traverse the membrane as a helical segment.

Belongs to the ATPase B chain family. As to quaternary structure, F-type ATPases have 2 components, F(1) - the catalytic core - and F(0) - the membrane proton channel. F(1) has five subunits: alpha(3), beta(3), gamma(1), delta(1), epsilon(1). F(0) has three main subunits: a(1), b(2) and c(10-14). The alpha and beta chains form an alternating ring which encloses part of the gamma chain. F(1) is attached to F(0) by a central stalk formed by the gamma and epsilon chains, while a peripheral stalk is formed by the delta and b chains.

Its subcellular location is the cell inner membrane. In terms of biological role, f(1)F(0) ATP synthase produces ATP from ADP in the presence of a proton or sodium gradient. F-type ATPases consist of two structural domains, F(1) containing the extramembraneous catalytic core and F(0) containing the membrane proton channel, linked together by a central stalk and a peripheral stalk. During catalysis, ATP synthesis in the catalytic domain of F(1) is coupled via a rotary mechanism of the central stalk subunits to proton translocation. Its function is as follows. Component of the F(0) channel, it forms part of the peripheral stalk, linking F(1) to F(0). The sequence is that of ATP synthase subunit b from Xylella fastidiosa (strain M23).